The chain runs to 248 residues: Mannose-binding protein C (248 aa).

An N-terminal signal peptide occupies residues 1-20 (MSPFLSLPLLLLSVLSASYS). The interval 36-112 (IACSSPGING…GDSSLAASER (77 aa)) is disordered. Positions 42-99 (GINGFPGKDGRDGTKGEKGEPGQGLRGLQGPPGKLGPPGNPGPSGSPGAKGQKGDPGA) constitute a Collagen-like domain. P47 is modified (4-hydroxyproline). The segment covering 49-61 (KDGRDGTKGEKGE) has biased composition (basic and acidic residues). P73, P79, P82, and P88 each carry 4-hydroxyproline. The stretch at 112 to 130 (RKALQTEMARIKKWVTFSL) forms a coiled coil. Positions 134–245 (VGKKLFLSNG…CSSSHLAICE (112 aa)) constitute a C-type lectin domain. 2 cysteine pairs are disulfide-bonded: C155/C244 and C222/C236.

In terms of assembly, oligomeric complex of 3 or more homotrimers. Interacts with MASP1 and MASP2. Interacts with MEP1A and MEP1B and may inhibit their catalytic activity. Hydroxylation on proline residues within the sequence motif, GXPG, is most likely to be 4-hydroxy as this fits the requirement for 4-hydroxylation in vertebrates.

The protein resides in the secreted. Calcium-dependent lectin involved in innate immune defense. Binds mannose, fucose and N-acetylglucosamine on different microorganisms and activates the lectin complement pathway. Binds to late apoptotic cells, as well as to apoptotic blebs and to necrotic cells, but not to early apoptotic cells, facilitating their uptake by macrophages. The chain is Mannose-binding protein C (MBL2) from Saguinus oedipus (Cotton-top tamarin).